Here is an 864-residue protein sequence, read N- to C-terminus: DNA mismatch repair protein MutS (864 aa).

607–614 (GPNMGGKS) lines the ATP pocket.

It belongs to the DNA mismatch repair MutS family.

Functionally, this protein is involved in the repair of mismatches in DNA. It is possible that it carries out the mismatch recognition step. This protein has a weak ATPase activity. The polypeptide is DNA mismatch repair protein MutS (Neisseria gonorrhoeae (strain NCCP11945)).